Consider the following 246-residue polypeptide: Carboxy-S-adenosyl-L-methionine synthase (246 aa).

S-adenosyl-L-methionine is bound by residues tyrosine 43, 68 to 70 (GCS), 93 to 94 (DN), 121 to 122 (DI), asparagine 136, and arginine 203.

This sequence belongs to the class I-like SAM-binding methyltransferase superfamily. Cx-SAM synthase family. Homodimer.

It catalyses the reaction prephenate + S-adenosyl-L-methionine = carboxy-S-adenosyl-L-methionine + 3-phenylpyruvate + H2O. In terms of biological role, catalyzes the conversion of S-adenosyl-L-methionine (SAM) to carboxy-S-adenosyl-L-methionine (Cx-SAM). This Vibrio cholerae serotype O1 (strain ATCC 39541 / Classical Ogawa 395 / O395) protein is Carboxy-S-adenosyl-L-methionine synthase.